A 390-amino-acid chain; its full sequence is Ureide permease 1 (390 aa).

At 1-9 the chain is on the extracellular side; sequence MYMIESKGG. A helical membrane pass occupies residues 10-30; the sequence is AIACMLLALLFLGTWPAIMTL. The Cytoplasmic portion of the chain corresponds to 31–44; the sequence is TERRGRLPQHTYLD. The chain crosses the membrane as a helical span at residues 45 to 65; the sequence is YTLTNLLAAVIIALTLGEIGP. At 66–78 the chain is on the extracellular side; it reads SRPNFFTQLSQDN. A helical membrane pass occupies residues 79–99; that stretch reads WQSVMFAMAGGIVLSLGNLAT. Topologically, residues 100 to 101 are cytoplasmic; that stretch reads QY. A helical transmembrane segment spans residues 102 to 122; sequence AWAYVGLSVTEVITASITVVI. At 123–136 the chain is on the extracellular side; that stretch reads GTTLNYFLDDRINR. The helical transmembrane segment at 137-157 threads the bilayer; it reads AEVLFPGVACFLIAVCFGSAV. Residues 158-221 lie on the Cytoplasmic side of the membrane; the sequence is HKSNAADNKT…RAIKVFGKST (64 aa). 213-220 contacts ATP; sequence AIKVFGKS. A helical membrane pass occupies residues 222-242; sequence IIGLVITFFAGICFSLFSPAF. Residues 243–261 lie on the Extracellular side of the membrane; the sequence is NLATNDQWHTLKHGVPKLN. The chain crosses the membrane as a helical span at residues 262–282; that stretch reads VYTAFFYFSISAFVVALILNI. Residues 283 to 307 are Cytoplasmic-facing; that stretch reads RFLYWPILGLPRSSFKAYLNDWNGR. A helical membrane pass occupies residues 308–328; that stretch reads GWSFLAGFLCGFGNGLQFMGG. Topologically, residues 329–333 are extracellular; the sequence is QAAGY. A helical transmembrane segment spans residues 334-354; it reads AAADAVQALPLVSTFWGILLF. At 355–363 the chain is on the cytoplasmic side; it reads GEYRRSSRK. The chain crosses the membrane as a helical span at residues 364-384; it reads TYTLLISMLLMFIVAVAVLMA. Topologically, residues 385 to 390 are extracellular; it reads SSGHRK.

The protein belongs to the plant ureide permease (TC 2.A.7.19) family. Expressed in leaves, flowers, roots and stems.

It is found in the membrane. Proton-coupled transporter that transports a wide spectrum of oxo derivatives of heterocyclic nitrogen compounds, including allantoin, uric acid and xanthine, but not adenine. Mediates high affinity transport of uracil and 5-fluorouracil (a toxic uracil analog). Mediates transport of free pyrimidines and may function during early seedling development in salvage pathways, by the utilization of pyrimidines from seed storage tissue. This is Ureide permease 1 from Arabidopsis thaliana (Mouse-ear cress).